A 360-amino-acid polypeptide reads, in one-letter code: Photosystem II protein D1 (360 aa).

Transmembrane regions (helical) follow at residues 29–46 (YIGWFGVLMIPTLLTATS), 118–133 (HFLTGVACYIGREWEL), and 142–156 (WISVAFTAPVAAAAA). Position 118 (H118) interacts with chlorophyll a. Y126 serves as a coordination point for pheophytin a. D170 and E189 together coordinate [CaMn4O5] cluster. A helical transmembrane segment spans residues 197–218 (FHQLGVAGVFGGSLFSAMHGSL). H198 lines the chlorophyll a pocket. A quinone is bound by residues H215 and 264-265 (SF). H215 contacts Fe cation. Residue H272 participates in Fe cation binding. The helical transmembrane segment at 274–288 (FLGLWPVVGIWLTAL) threads the bilayer. The [CaMn4O5] cluster site is built by H332, E333, D342, and A344. Residues 345–360 (SGESLPVALTAPAVNG) constitute a propeptide that is removed on maturation.

This sequence belongs to the reaction center PufL/M/PsbA/D family. In terms of assembly, PSII is composed of 1 copy each of membrane proteins PsbA, PsbB, PsbC, PsbD, PsbE, PsbF, PsbH, PsbI, PsbJ, PsbK, PsbL, PsbM, PsbT, PsbX, PsbY, PsbZ, Psb30/Ycf12, at least 3 peripheral proteins of the oxygen-evolving complex and a large number of cofactors. It forms dimeric complexes. It depends on The D1/D2 heterodimer binds P680, chlorophylls that are the primary electron donor of PSII, and subsequent electron acceptors. It shares a non-heme iron and each subunit binds pheophytin, quinone, additional chlorophylls, carotenoids and lipids. D1 provides most of the ligands for the Mn4-Ca-O5 cluster of the oxygen-evolving complex (OEC). There is also a Cl(-1) ion associated with D1 and D2, which is required for oxygen evolution. The PSII complex binds additional chlorophylls, carotenoids and specific lipids. as a cofactor. Tyr-161 forms a radical intermediate that is referred to as redox-active TyrZ, YZ or Y-Z. Post-translationally, C-terminally processed by CTPA; processing is essential to allow assembly of the oxygen-evolving complex and thus photosynthetic growth.

It is found in the plastid. It localises to the chloroplast thylakoid membrane. The catalysed reaction is 2 a plastoquinone + 4 hnu + 2 H2O = 2 a plastoquinol + O2. Photosystem II (PSII) is a light-driven water:plastoquinone oxidoreductase that uses light energy to abstract electrons from H(2)O, generating O(2) and a proton gradient subsequently used for ATP formation. It consists of a core antenna complex that captures photons, and an electron transfer chain that converts photonic excitation into a charge separation. The D1/D2 (PsbA/PsbD) reaction center heterodimer binds P680, the primary electron donor of PSII as well as several subsequent electron acceptors. The chain is Photosystem II protein D1 from Pyropia yezoensis (Susabi-nori).